A 300-amino-acid polypeptide reads, in one-letter code: UDP-3-O-acyl-N-acetylglucosamine deacetylase (300 aa).

Zn(2+)-binding residues include His76, His235, and Asp239. His262 functions as the Proton donor in the catalytic mechanism.

This sequence belongs to the LpxC family. The cofactor is Zn(2+).

It catalyses the reaction a UDP-3-O-[(3R)-3-hydroxyacyl]-N-acetyl-alpha-D-glucosamine + H2O = a UDP-3-O-[(3R)-3-hydroxyacyl]-alpha-D-glucosamine + acetate. It functions in the pathway glycolipid biosynthesis; lipid IV(A) biosynthesis; lipid IV(A) from (3R)-3-hydroxytetradecanoyl-[acyl-carrier-protein] and UDP-N-acetyl-alpha-D-glucosamine: step 2/6. Its function is as follows. Catalyzes the hydrolysis of UDP-3-O-myristoyl-N-acetylglucosamine to form UDP-3-O-myristoylglucosamine and acetate, the committed step in lipid A biosynthesis. This is UDP-3-O-acyl-N-acetylglucosamine deacetylase from Halorhodospira halophila (strain DSM 244 / SL1) (Ectothiorhodospira halophila (strain DSM 244 / SL1)).